The primary structure comprises 150 residues: UPF0506 protein SJCHGC03047 (150 aa).

An N-terminal signal peptide occupies residues 1–18 (MNTCIQLLILCLVTLTNS). N-linked (GlcNAc...) asparagine glycosylation is found at asparagine 20, asparagine 48, and asparagine 110. Cystine bridges form between cysteine 116–cysteine 130, cysteine 123–cysteine 134, and cysteine 129–cysteine 139.

The protein belongs to the UPF0506 family.

The protein localises to the secreted. The sequence is that of UPF0506 protein SJCHGC03047 from Schistosoma japonicum (Blood fluke).